Consider the following 115-residue polypeptide: Holo-[acyl-carrier-protein] synthase (115 aa).

Residues Asp-8 and Glu-50 each coordinate Mg(2+).

It belongs to the P-Pant transferase superfamily. AcpS family. Mg(2+) serves as cofactor.

Its subcellular location is the cytoplasm. It carries out the reaction apo-[ACP] + CoA = holo-[ACP] + adenosine 3',5'-bisphosphate + H(+). Its function is as follows. Transfers the 4'-phosphopantetheine moiety from coenzyme A to a Ser of acyl-carrier-protein. The polypeptide is Holo-[acyl-carrier-protein] synthase (Pseudarthrobacter chlorophenolicus (strain ATCC 700700 / DSM 12829 / CIP 107037 / JCM 12360 / KCTC 9906 / NCIMB 13794 / A6) (Arthrobacter chlorophenolicus)).